Reading from the N-terminus, the 129-residue chain is Keratin-associated protein 5-6 (129 aa).

A run of 6 repeats spans residues 28-31 (CCVP), 34-37 (CCKP), 40-43 (CCVP), 90-93 (CCKP), 109-112 (CCKP), and 119-122 (CCVP). Residues 28–112 (CCVPICCCKP…SCCQSSCCKP (85 aa)) are 6 X 4 AA repeats of C-C-X-P.

Belongs to the KRTAP type 5 family. As to quaternary structure, interacts with hair keratins. Expressed in hair root and not in skin. Expressed also in liver and skeletal muscle.

Functionally, in the hair cortex, hair keratin intermediate filaments are embedded in an interfilamentous matrix, consisting of hair keratin-associated protein (KRTAP), which are essential for the formation of a rigid and resistant hair shaft through their extensive disulfide bond cross-linking with abundant cysteine residues of hair keratins. The matrix proteins include the high-sulfur and high-glycine-tyrosine keratins. This Homo sapiens (Human) protein is Keratin-associated protein 5-6 (KRTAP5-6).